The primary structure comprises 39 residues: Photosystem II reaction center protein L (39 aa).

The helical transmembrane segment at 18–38 threads the bilayer; sequence SLYLGLLLVFVMGILFSSYFF.

This sequence belongs to the PsbL family. In terms of assembly, PSII is composed of 1 copy each of membrane proteins PsbA, PsbB, PsbC, PsbD, PsbE, PsbF, PsbH, PsbI, PsbJ, PsbK, PsbL, PsbM, PsbT, PsbX, PsbY, Psb30/Ycf12, peripheral proteins PsbO, CyanoQ (PsbQ), PsbU, PsbV and a large number of cofactors. It forms dimeric complexes.

It is found in the cellular thylakoid membrane. In terms of biological role, one of the components of the core complex of photosystem II (PSII). PSII is a light-driven water:plastoquinone oxidoreductase that uses light energy to abstract electrons from H(2)O, generating O(2) and a proton gradient subsequently used for ATP formation. It consists of a core antenna complex that captures photons, and an electron transfer chain that converts photonic excitation into a charge separation. This subunit is found at the monomer-monomer interface and is required for correct PSII assembly and/or dimerization. The sequence is that of Photosystem II reaction center protein L from Prochlorococcus marinus (strain NATL2A).